Reading from the N-terminus, the 375-residue chain is WAT1-related protein At1g70260 (375 aa).

Transmembrane regions (helical) follow at residues 10–30, 41–61, 72–92, 106–126, 143–163, 191–211, 225–245, 259–278, 289–309, and 312–332; these read LVPF…TIMA, FVFV…FSFL, IFSW…IFMF, IVVC…SIIL, MGTI…GPFI, WFLG…FNVV, VASF…LFME, LYLI…SVHV, VPLF…SFFV, and LHYG…TVSW. One can recognise an EamA domain in the interval 25–134; it reads ALTIMAKTAL…ILGRSKLDWR (110 aa). The interval 337–356 is disordered; it reads ESEEKQSSNEERKSIKTIHH.

The protein belongs to the drug/metabolite transporter (DMT) superfamily. Plant drug/metabolite exporter (P-DME) (TC 2.A.7.4) family.

It is found in the membrane. This Arabidopsis thaliana (Mouse-ear cress) protein is WAT1-related protein At1g70260.